The sequence spans 466 residues: Replication termination factor 1 (466 aa).

2 DNA-binding domain regions span residues 94-249 (RDYT…LRRK) and 250-421 (YNPF…KKTL). 2 HTH myb-type domains span residues 251–304 (NPFK…QPGE) and 305–363 (INRS…SRDI). 2 consecutive DNA-binding regions (H-T-H motif) follow at residues 278 to 300 (WSLI…RDYI) and 336 to 359 (WSLI…YTLI).

The protein localises to the nucleus. Functionally, mediates site-specific replication termination at the polar replication barrier RTS1, a barrier which ensures that replication of the mat1 locus in S.pombe occurs in the centromere-proximal direction. The protein is Replication termination factor 1 (rtf1) of Schizosaccharomyces pombe (strain 972 / ATCC 24843) (Fission yeast).